The primary structure comprises 532 residues: Cytochrome P450 99A2 (532 aa).

Residues 30-50 (SAATLTLVSLLTLPILLALLT) form a helical membrane-spanning segment. Cysteine 468 contributes to the heme binding site. Residues 473-493 (FGMVLLELIVARLLYYFDWSL) form a helical membrane-spanning segment.

It belongs to the cytochrome P450 family. The cofactor is heme.

It localises to the membrane. Involved in momilactone phytoalexins biosynthesis. Participates in the biosynthetic steps between 9-beta-pimara-7,15-diene and 3-beta-hydroxy-9-beta-pimara-7,15-dien-19,6-beta-olide. This chain is Cytochrome P450 99A2 (CYP99A2), found in Oryza sativa subsp. japonica (Rice).